The primary structure comprises 286 residues: Shikimate dehydrogenase (NADP(+)) (286 aa).

Residues 21 to 23 (TLS) and Thr68 each bind shikimate. Lys72 functions as the Proton acceptor in the catalytic mechanism. Residue Asp84 participates in NADP(+) binding. Residues Asn93 and Asp108 each contribute to the shikimate site. NADP(+) contacts are provided by residues 132 to 136 (GYGGA) and Leu226. Tyr228 contributes to the shikimate binding site. Gly249 serves as a coordination point for NADP(+).

The protein belongs to the shikimate dehydrogenase family. As to quaternary structure, homodimer.

The catalysed reaction is shikimate + NADP(+) = 3-dehydroshikimate + NADPH + H(+). It participates in metabolic intermediate biosynthesis; chorismate biosynthesis; chorismate from D-erythrose 4-phosphate and phosphoenolpyruvate: step 4/7. Involved in the biosynthesis of the chorismate, which leads to the biosynthesis of aromatic amino acids. Catalyzes the reversible NADPH linked reduction of 3-dehydroshikimate (DHSA) to yield shikimate (SA). In Thermosynechococcus vestitus (strain NIES-2133 / IAM M-273 / BP-1), this protein is Shikimate dehydrogenase (NADP(+)).